The primary structure comprises 433 residues: Polygalacturonase ADPG2 (433 aa).

Residues 1 to 24 form the signal peptide; sequence MARCTNLVTVFLLWALLMFSWCKA. 5 PbH1 repeats span residues 223–249, 250–271, 273–293, 303–324, and 332–353; these read CSNVQVSNVVVTAPADSPNTDGIHITN, TQNIRVSESIIGTGDDCISIES, SQNVQINDITCGPGHGISIGS, VSGVTVDGAKLSGTDNGVRIKT, and ASNIIFQNIQMDNVKNPIIIDQ. The Proton donor role is filled by D264. The active site involves H287.

It belongs to the glycosyl hydrolase 28 family. Expressed in roots and in the abscission zone of the sepals, petals and stamens of flowers, at the base of cauline leaves and in the basal cell of trichomes from senescing leaves. Found at the site of lateral root emergence, in the dehiscence zone of anthers and maturing siliques. Also expressed early in anther development, at the time of microspore separation. Expressed in germinating seeds, at the point at which the radicle broke through the seed coat. Not expressed at the junction between the seed and the funiculus or in the dehiscence zone of anthers or pods.

The protein resides in the secreted. It is found in the cell wall. The enzyme catalyses (1,4-alpha-D-galacturonosyl)n+m + H2O = (1,4-alpha-D-galacturonosyl)n + (1,4-alpha-D-galacturonosyl)m.. In terms of biological role, polygalacturonase involved in cell separation in the final stages of pod shatter, in anther dehiscence and in floral organ abscission. In Arabidopsis thaliana (Mouse-ear cress), this protein is Polygalacturonase ADPG2 (ADPG2).